A 481-amino-acid polypeptide reads, in one-letter code: Argininosuccinate lyase (481 aa).

It belongs to the lyase 1 family. Argininosuccinate lyase subfamily.

The protein resides in the cytoplasm. It carries out the reaction 2-(N(omega)-L-arginino)succinate = fumarate + L-arginine. The protein operates within amino-acid biosynthesis; L-arginine biosynthesis; L-arginine from L-ornithine and carbamoyl phosphate: step 3/3. In Methanococcus maripaludis (strain C7 / ATCC BAA-1331), this protein is Argininosuccinate lyase.